Here is a 522-residue protein sequence, read N- to C-terminus: Amine oxidase [flavin-containing] (522 aa).

The Cytoplasmic portion of the chain corresponds to 1–492 (MTAQNTFDVI…FWERNLPSVG (492 aa)). An S-8alpha-FAD cysteine modification is found at Cys-399. Residues 493-513 (GFINFLAASVLSVATAAGMLA) form a helical; Anchor for type IV membrane protein membrane-spanning segment. The Mitochondrial intermembrane segment spans residues 514–522 (YQKGLLTRS).

It belongs to the flavin monoamine oxidase family. Requires FAD as cofactor.

The protein resides in the mitochondrion outer membrane. It carries out the reaction a secondary aliphatic amine + O2 + H2O = a primary amine + an aldehyde + H2O2. In terms of biological role, catalyzes the oxidative deamination of biogenic and xenobiotic amines and has important functions in the metabolism of neuroactive and vasoactive amines in the central nervous system and peripheral tissues. Oxidizes both 5-hydroxytryptamine (5-HT) and beta-phenylethylamine (PEA). This is Amine oxidase [flavin-containing] (mao) from Oncorhynchus mykiss (Rainbow trout).